The chain runs to 507 residues: DNA nucleotidylexotransferase (507 aa).

A Nuclear localization signal motif is present at residues proline 11–lysine 17. A BRCT domain is found at glutamine 27–leucine 124. Residues valine 254–threonine 258 are involved in DNA binding. A 2'-deoxyribonucleoside 5'-triphosphate is bound by residues glycine 329–lysine 334 and histidine 338–aspartate 341. Residues aspartate 339, aspartate 341, and aspartate 431 each contribute to the Mg(2+) site. Residue glycine 446 to tryptophan 447 participates in a 2'-deoxyribonucleoside 5'-triphosphate binding.

The protein belongs to the DNA polymerase type-X family. It depends on Mg(2+) as a cofactor. Found in the thymus and not in the spleen, kidney, intestine, or liver.

Its subcellular location is the nucleus. It catalyses the reaction DNA(n) + a 2'-deoxyribonucleoside 5'-triphosphate = DNA(n+1) + diphosphate. Functionally, template-independent DNA polymerase which catalyzes the random addition of deoxynucleoside 5'-triphosphate to the 3'-end of a DNA initiator. One of the in vivo functions of this enzyme is the addition of nucleotides at the junction (N region) of rearranged Ig heavy chain and T-cell receptor gene segments during the maturation of B- and T-cells. The sequence is that of DNA nucleotidylexotransferase (dntt) from Xenopus laevis (African clawed frog).